Reading from the N-terminus, the 680-residue chain is Translation factor GUF1 homolog, chloroplastic (680 aa).

The transit peptide at 1-51 (MAAKINSLAALVSLQASHHHHXSTPFYFSPFSPHLSTTLTSRRRSLRSAVV) directs the protein to the chloroplast. Positions 83–264 (SNIRNFCIIA…AIVKRIPPPC (182 aa)) constitute a tr-type G domain. GTP contacts are provided by residues 92 to 99 (AHIDHGKS), 157 to 161 (DTPGH), and 211 to 214 (NKID).

This sequence belongs to the TRAFAC class translation factor GTPase superfamily. Classic translation factor GTPase family. LepA subfamily.

The protein resides in the plastid. It is found in the chloroplast. The catalysed reaction is GTP + H2O = GDP + phosphate + H(+). In terms of biological role, promotes chloroplast protein synthesis. May act as a fidelity factor of the translation reaction, by catalyzing a one-codon backward translocation of tRNAs on improperly translocated ribosomes. The sequence is that of Translation factor GUF1 homolog, chloroplastic from Vitis vinifera (Grape).